The chain runs to 293 residues: Elongation factor Ts (293 aa).

Residues 80-83 (TDFV) are involved in Mg(2+) ion dislocation from EF-Tu.

Belongs to the EF-Ts family.

It is found in the cytoplasm. In terms of biological role, associates with the EF-Tu.GDP complex and induces the exchange of GDP to GTP. It remains bound to the aminoacyl-tRNA.EF-Tu.GTP complex up to the GTP hydrolysis stage on the ribosome. The protein is Elongation factor Ts of Lacticaseibacillus casei (strain BL23) (Lactobacillus casei).